The primary structure comprises 241 residues: Sugar fermentation stimulation protein homolog (241 aa).

This sequence belongs to the SfsA family.

This is Sugar fermentation stimulation protein homolog from Yersinia enterocolitica serotype O:8 / biotype 1B (strain NCTC 13174 / 8081).